The following is a 166-amino-acid chain: Large ribosomal subunit protein uL10 (166 aa).

Belongs to the universal ribosomal protein uL10 family. In terms of assembly, part of the ribosomal stalk of the 50S ribosomal subunit. The N-terminus interacts with L11 and the large rRNA to form the base of the stalk. The C-terminus forms an elongated spine to which L12 dimers bind in a sequential fashion forming a multimeric L10(L12)X complex.

Its function is as follows. Forms part of the ribosomal stalk, playing a central role in the interaction of the ribosome with GTP-bound translation factors. In Lactobacillus johnsonii (strain CNCM I-12250 / La1 / NCC 533), this protein is Large ribosomal subunit protein uL10.